The chain runs to 321 residues: MNSENSFSSSEHITVLLHEAVNGLALKENGIYIDGTFGRGGHSRFILSQLSSNGRLIAVDRDPRAIAEAHKIQDLRFQIEHNSFSHIPEICDKLNLVGKIDGILLDLGVSSPQLDEAERGFSFMKDGPLDMRMDTTQGLSAEEWLKQVSIEDLTWVLKTFGEERFAKRIATAIVDFNKSAVKNGTEFLSRTSQLAELISQAVPFKDKHKHPATRSFQAIRIFINSELDELESLLNSALDMLAPEGRLSIISFHSLEDRMVKHFMKKQSKGEDIPKGLPLREDQIQRNQKLRIIGKAIQPSDAEIQANPRSRSAILRVAERI.

S-adenosyl-L-methionine-binding positions include 40 to 42, D60, F84, D106, and Q113; that span reads GGH.

This sequence belongs to the methyltransferase superfamily. RsmH family.

It is found in the cytoplasm. The enzyme catalyses cytidine(1402) in 16S rRNA + S-adenosyl-L-methionine = N(4)-methylcytidine(1402) in 16S rRNA + S-adenosyl-L-homocysteine + H(+). Specifically methylates the N4 position of cytidine in position 1402 (C1402) of 16S rRNA. This chain is Ribosomal RNA small subunit methyltransferase H, found in Haemophilus influenzae (strain ATCC 51907 / DSM 11121 / KW20 / Rd).